The chain runs to 113 residues: Sperm-associated antigen 11B (113 aa).

An N-terminal signal peptide occupies residues M1–S26. 3 disulfide bridges follow: C80/C108, C87/C101, and C91/C109.

This sequence belongs to the beta-defensin family.

Its subcellular location is the secreted. Its function is as follows. Has antimicrobial activity against E.coli. Plays a role in the defense response in the male reproductive tract, contributing to sperm maturation, storage and protection. This Mus musculus (Mouse) protein is Sperm-associated antigen 11B.